The following is a 459-amino-acid chain: Argininosuccinate lyase (459 aa).

This sequence belongs to the lyase 1 family. Argininosuccinate lyase subfamily.

Its subcellular location is the cytoplasm. The catalysed reaction is 2-(N(omega)-L-arginino)succinate = fumarate + L-arginine. It participates in amino-acid biosynthesis; L-arginine biosynthesis; L-arginine from L-ornithine and carbamoyl phosphate: step 3/3. The polypeptide is Argininosuccinate lyase (Geobacillus sp. (strain WCH70)).